The following is a 441-amino-acid chain: Nuclear distribution protein nudF (441 aa).

The region spanning 9 to 41 (QAEELHKSIIAYLASVNLTESSAALRAELGDSV) is the LisH domain. WD repeat units follow at residues 87–128 (GHRE…RTVK), 130–170 (HTKA…KNIR), 174–221 (GHDH…CVKT), 224–263 (GHVD…TKST), 266–326 (GHEH…IKTL), 328–367 (GHDN…KCVR), 372–402 (AHGH…NGAP), and 403–440 (AATA…RIFA). The disordered stretch occupies residues 390–415 (GGANGESETNGAPAATATTNGVRPDP). The span at 398–410 (TNGAPAATATTNG) shows a compositional bias: low complexity.

The protein belongs to the WD repeat LIS1/nudF family. In terms of assembly, self-associates. Interacts with nudE and dynein.

The protein resides in the cytoplasm. It is found in the cytoskeleton. The protein localises to the spindle pole. Functionally, positively regulates the activity of the minus-end directed microtubule motor protein dynein. May enhance dynein-mediated microtubule sliding by targeting dynein to the microtubule plus end. Required for nuclear migration during vegetative growth as well as development. Required for retrograde early endosome (EE) transport from the hyphal tip. Required for localization of dynein to the mitotic spindle poles. Recruits additional proteins to the dynein complex at SPBs. This Neosartorya fischeri (strain ATCC 1020 / DSM 3700 / CBS 544.65 / FGSC A1164 / JCM 1740 / NRRL 181 / WB 181) (Aspergillus fischerianus) protein is Nuclear distribution protein nudF.